A 114-amino-acid polypeptide reads, in one-letter code: Endoribonuclease MazF2 (114 aa).

Belongs to the PemK/MazF family. Probably forms a complex with cognate antitoxin MazE2.

Toxic component of a type II toxin-antitoxin (TA) system. Acts as an endoribonuclease on single-strand RNA, cleaving between the second and third bases in the sequences CUCCU and UUCCU. Neutralized by coexpression with cognate antitoxin MazE2. The chain is Endoribonuclease MazF2 (mazF2) from Mycobacterium bovis (strain ATCC BAA-935 / AF2122/97).